A 1305-amino-acid polypeptide reads, in one-letter code: Myosin-IIIb (1305 aa).

Residues 15–281 (WEIIETIGKG…VTHLLDHPFI (267 aa)) form the Protein kinase domain. ATP-binding positions include 21–29 (IGKGTYGKV) and Lys-44. The active-site Proton acceptor is the Asp-144. Residues 331–1046 (CLEDDLVNLE…HVEQLNLLLR (716 aa)) form the Myosin motor domain. Positions 927–949 (LMDLLSKMVVGQPHFIRCIKPND) are actin-binding. 2 consecutive IQ domains span residues 1048–1077 (VMGR…KREK) and 1075–1104 (REKG…RRSE). Disordered regions lie at residues 1093 to 1164 (RKLK…VTSG) and 1200 to 1233 (SPCE…MLSS).

In the C-terminal section; belongs to the TRAFAC class myosin-kinesin ATPase superfamily. Myosin family. It in the N-terminal section; belongs to the protein kinase superfamily. STE Ser/Thr protein kinase family. Interacts (via C-terminus) with ESPN. Interacts (via C-terminus) with ESPNL. In terms of tissue distribution, expressed in the cochlear hair cells (at protein level). Expressed in utricle hair bundles (at protein level).

It localises to the cytoplasm. It is found in the cytoskeleton. The protein resides in the cell projection. Its subcellular location is the stereocilium. It carries out the reaction L-seryl-[protein] + ATP = O-phospho-L-seryl-[protein] + ADP + H(+). It catalyses the reaction L-threonyl-[protein] + ATP = O-phospho-L-threonyl-[protein] + ADP + H(+). Its function is as follows. Probable actin-based motor with a protein kinase activity. Required for normal cochlear hair bundle development and hearing. Plays an important role in the early steps of cochlear hair bundle morphogenesis. Influences the number and lengths of stereocilia to be produced and limits the growth of microvilli within the forming auditory hair bundles thereby contributing to the architecture of the hair bundle, including its staircase pattern. Involved in the elongation of actin in stereocilia tips by transporting the actin regulatory factor ESPN to the plus ends of actin filaments. The chain is Myosin-IIIb (Myo3b) from Mus musculus (Mouse).